Consider the following 284-residue polypeptide: MEMO1 family protein LS215_2219 (284 aa).

This sequence belongs to the MEMO1 family.

The sequence is that of MEMO1 family protein LS215_2219 from Saccharolobus islandicus (strain L.S.2.15 / Lassen #1) (Sulfolobus islandicus).